We begin with the raw amino-acid sequence, 371 residues long: Glutamate 5-kinase (371 aa).

Lysine 14 contributes to the ATP binding site. Residues serine 54, aspartate 141, and asparagine 153 each contribute to the substrate site. Residue 173-174 (TD) coordinates ATP. Residues 280-357 (AGSLIVDAGA…SDIEQLLGYI (78 aa)) form the PUA domain.

Belongs to the glutamate 5-kinase family.

The protein resides in the cytoplasm. It carries out the reaction L-glutamate + ATP = L-glutamyl 5-phosphate + ADP. It functions in the pathway amino-acid biosynthesis; L-proline biosynthesis; L-glutamate 5-semialdehyde from L-glutamate: step 1/2. Its function is as follows. Catalyzes the transfer of a phosphate group to glutamate to form L-glutamate 5-phosphate. In Azoarcus sp. (strain BH72), this protein is Glutamate 5-kinase.